The following is a 71-amino-acid chain: UPF0346 protein SPG_0874 (71 aa).

This sequence belongs to the UPF0346 family.

This Streptococcus pneumoniae serotype 19F (strain G54) protein is UPF0346 protein SPG_0874.